The chain runs to 187 residues: Transmembrane protein 11-A, mitochondrial (187 aa).

A run of 2 helical transmembrane segments spans residues 79–95 and 102–119; these read TAVL…LALP and VSLP…LYGI.

This sequence belongs to the TMEM11 family.

It is found in the mitochondrion inner membrane. Its function is as follows. Plays a role in mitochondrial morphogenesis. The chain is Transmembrane protein 11-A, mitochondrial (tmem11-a) from Xenopus laevis (African clawed frog).